A 188-amino-acid chain; its full sequence is MARRARFSPRLHIPAARAALGPHLHFPRRRLVLRHCGVRAFVGDAIVSKKEMTNPLCAQAIVFGNGFVETYVRSLDPRLLGAYHALSRPVCERPLFAVRGWRRLFPIVARRLDAVERRTRRVLRSMCRTYTTCMSADRAAAVSHPVMRRRWFGHRATKTRRARLRRRCRNRSSKRRAERRKRFCNYCP.

Interacts with host IKBKG; this interaction inhibits host NF-kappa-B pathway activation.

It is found in the host nucleus. It localises to the host cytoplasm. The protein localises to the host perinuclear region. Its subcellular location is the virion. Its function is as follows. Plays a role in the inhibition of the host NF-kappa-B pathway early during infection. Prevents the host RELA subunit from reaching the nucleus and activate transcription. This is Protein ORFV073 from Capra hircus (Goat).